The chain runs to 1159 residues: ABC transporter G family member 24 (1159 aa).

A run of 2 helical transmembrane segments spans residues 11-31 (FNSI…GNNC) and 415-435 (VGSG…FLIF). One can recognise an ABC transporter domain in the interval 454-707 (LSFHNISCYV…FIKQKIAGMT (254 aa)). ATP is bound at residue 497–504 (GLSGSGKT). Positions 752–846 (QSTSPALSSN…DNNNKNNDDD (95 aa)) are disordered. Low complexity-rich tracts occupy residues 759–768 (SSNSNNSDIN) and 775–784 (INNPHNQNIH). Residues 785–795 (HQQHHHHHRHI) are compositionally biased toward basic residues. Low complexity predominate over residues 822 to 841 (DNINNNNNNNKVKNNDNNNK). The ABC transmembrane type-2 domain maps to 902 to 1154 (FLLRTTYFVH…LLAYVFLRFL (253 aa)). 6 consecutive transmembrane segments (helical) span residues 909–929 (FVHI…PANL), 937–957 (FGAM…SLDL), 1005–1025 (YMIG…SLVL), 1047–1067 (ANMV…FLLA), 1074–1094 (YLIG…PVVN), and 1135–1155 (VLLG…RFLV).

Belongs to the ABC transporter superfamily. ABCG family. Eye pigment precursor importer (TC 3.A.1.204) subfamily.

Its subcellular location is the membrane. In Dictyostelium discoideum (Social amoeba), this protein is ABC transporter G family member 24 (abcG24).